A 519-amino-acid polypeptide reads, in one-letter code: ATP synthase subunit alpha (519 aa).

174–181 (GDRQTGKT) contributes to the ATP binding site.

It belongs to the ATPase alpha/beta chains family. As to quaternary structure, F-type ATPases have 2 components, CF(1) - the catalytic core - and CF(0) - the membrane proton channel. CF(1) has five subunits: alpha(3), beta(3), gamma(1), delta(1), epsilon(1). CF(0) has three main subunits: a(1), b(2) and c(9-12). The alpha and beta chains form an alternating ring which encloses part of the gamma chain. CF(1) is attached to CF(0) by a central stalk formed by the gamma and epsilon chains, while a peripheral stalk is formed by the delta and b chains.

It localises to the cell inner membrane. It carries out the reaction ATP + H2O + 4 H(+)(in) = ADP + phosphate + 5 H(+)(out). In terms of biological role, produces ATP from ADP in the presence of a proton gradient across the membrane. The alpha chain is a regulatory subunit. This is ATP synthase subunit alpha from Acidovorax ebreus (strain TPSY) (Diaphorobacter sp. (strain TPSY)).